A 244-amino-acid chain; its full sequence is Demethylmenaquinone methyltransferase (244 aa).

S-adenosyl-L-methionine contacts are provided by residues T65, D86, and 114-115 (DA).

It belongs to the class I-like SAM-binding methyltransferase superfamily. MenG/UbiE family.

It catalyses the reaction a 2-demethylmenaquinol + S-adenosyl-L-methionine = a menaquinol + S-adenosyl-L-homocysteine + H(+). It functions in the pathway quinol/quinone metabolism; menaquinone biosynthesis; menaquinol from 1,4-dihydroxy-2-naphthoate: step 2/2. Functionally, methyltransferase required for the conversion of demethylmenaquinol (DMKH2) to menaquinol (MKH2). The sequence is that of Demethylmenaquinone methyltransferase from Lactobacillus johnsonii (strain CNCM I-12250 / La1 / NCC 533).